The sequence spans 496 residues: Glycylpeptide N-tetradecanoyltransferase 1 (496 aa).

Residues 1-82 are disordered; sequence MADESETAVK…SAQDQPVKMN (82 aa). 2 positions are modified to phosphoserine: Ser31 and Ser47. Residues 55 to 66 show a composition bias toward basic residues; sequence KKKKKKQKKKKE. Phosphoserine is present on Ser83. 11 residues coordinate tetradecanoyl-CoA: Gln118, Phe119, Trp120, Phe247, Leu248, Cys249, Val250, Ser256, Arg258, Val259, and Ala260.

It belongs to the NMT family.

It is found in the cytoplasm. It localises to the cytosol. Its subcellular location is the membrane. It catalyses the reaction N-terminal glycyl-[protein] + tetradecanoyl-CoA = N-tetradecanoylglycyl-[protein] + CoA + H(+). The enzyme catalyses N-terminal glycyl-L-lysyl-[protein] + tetradecanoyl-CoA = N-terminal glycyl-(N(6)-tetradecanoyl)-L-lysyl-[protein] + CoA + H(+). Its function is as follows. Adds a myristoyl group to the N-terminal glycine residue of certain cellular and viral proteins. Also able to mediate N-terminal lysine myristoylation of proteins: catalyzes myristoylation of ARF6 on both 'Gly-2' and 'Lys-3'. Lysine myristoylation is required to maintain ARF6 on membranes during the GTPase cycle. The chain is Glycylpeptide N-tetradecanoyltransferase 1 (NMT1) from Pongo abelii (Sumatran orangutan).